Here is a 352-residue protein sequence, read N- to C-terminus: DNA polymerase IV (352 aa).

Positions 6-186 constitute a UmuC domain; the sequence is IIHIDMDAFY…LPLGKIPGVG (181 aa). Residues aspartate 10 and aspartate 104 each contribute to the Mg(2+) site. Glutamate 105 is a catalytic residue.

Belongs to the DNA polymerase type-Y family. Monomer. Mg(2+) is required as a cofactor.

It localises to the cytoplasm. The enzyme catalyses DNA(n) + a 2'-deoxyribonucleoside 5'-triphosphate = DNA(n+1) + diphosphate. Poorly processive, error-prone DNA polymerase involved in untargeted mutagenesis. Copies undamaged DNA at stalled replication forks, which arise in vivo from mismatched or misaligned primer ends. These misaligned primers can be extended by PolIV. Exhibits no 3'-5' exonuclease (proofreading) activity. May be involved in translesional synthesis, in conjunction with the beta clamp from PolIII. This chain is DNA polymerase IV, found in Neisseria meningitidis serogroup C / serotype 2a (strain ATCC 700532 / DSM 15464 / FAM18).